The chain runs to 246 residues: tRNA (guanine-N(1)-)-methyltransferase (246 aa).

S-adenosyl-L-methionine is bound by residues Gly113 and 133-138 (IGDFVM).

It belongs to the RNA methyltransferase TrmD family. In terms of assembly, homodimer.

It is found in the cytoplasm. The enzyme catalyses guanosine(37) in tRNA + S-adenosyl-L-methionine = N(1)-methylguanosine(37) in tRNA + S-adenosyl-L-homocysteine + H(+). Its function is as follows. Specifically methylates guanosine-37 in various tRNAs. In Vibrio atlanticus (strain LGP32) (Vibrio splendidus (strain Mel32)), this protein is tRNA (guanine-N(1)-)-methyltransferase.